The primary structure comprises 1391 residues: CAP-Gly domain-containing linker protein 1 (1391 aa).

A disordered region spans residues 1 to 53 (MSMLKPSGLKAPTKILKPGSTALKTPAAAAAPVEKTIPSEKASGPPSSETQEE). Position 48 is a phosphoserine (serine 48). Threonine 50 carries the post-translational modification Phosphothreonine. The CAP-Gly 1 domain maps to 78-120 (GETQFAPGQWAGIVLDEPIGKNDGSVAGVRYFQCEPLKGIFTR). The tract at residues 97–101 (GKNDG) is important for tubulin binding. A disordered region spans residues 129–182 (QAEDEANGLQAAPGRTASPLSTAAATMVSSSPATPSNIPHKPSQSTAKEPSATP). Serine 146 is modified (phosphoserine). Positions 146–182 (SPLSTAAATMVSSSPATPSNIPHKPSQSTAKEPSATP) are enriched in polar residues. At threonine 181 the chain carries Phosphothreonine. Residues serine 194, serine 196, serine 199, and serine 203 each carry the phosphoserine modification. The CAP-Gly 2 domain occupies 231-273 (GETDFAKGEWCGVELDEPLGKNDGAVAGTRYFQCQPKYGLFAP). Residues 302-331 (TPASLKRSPSASSLSSMSSVASSVSSKPSR) are compositionally biased toward low complexity. The disordered stretch occupies residues 302–336 (TPASLKRSPSASSLSSMSSVASSVSSKPSRTGLLT). Residue serine 309 is modified to Phosphoserine. Serine 311 bears the Phosphoserine; by PKA mark. Phosphoserine is present on residues serine 314, serine 347, and serine 1189. Residues 349–1306 (TTALQEALKE…VEMMSEAALN (958 aa)) adopt a coiled-coil conformation. The tract at residues 1251–1272 (KRQLSSSSGNTDAQAEEDERAQ) is disordered. Phosphoserine is present on serine 1317. A CCHC-type zinc finger spans residues 1370–1387 (PYCEICEMFGHWATNCND).

In terms of assembly, interacts with MTOR; phosphorylates and regulates CLIP1. Interacts (via CAP-Gly domains) with tubulin. Interacts with SLAIN2. Interacts with TUBA1B, MAPRE1 and MAPRE3. Interacts (via zinc finger) with DCTN1. Binds preferentially to tyrosinated microtubules, and only marginally to detyrosinated microtubules. Post-translationally, phosphorylated. Phosphorylation induces conformational changes by increasing the affinity of the N-terminus for C-terminus, resulting in inhibition of its function thus decreasing its binding to microtubules and DCTN1. Exhibits a folded, autoinhibited conformation when phosphorylated and an open conformation when dephosphorylated with increased binding affinity to microtubules and DCTN1. Phosphorylation regulates its recruitment to tyrosinated microtubules and the recruitment of vesicular cargo to microtubules in neurons. Phosphorylation by MTOR may positively regulate CLIP1 association with microtubules. Expressed in the testes (at protein level).

It localises to the cytoplasm. It is found in the cytoskeleton. The protein localises to the cytoplasmic vesicle membrane. The protein resides in the cell projection. Its subcellular location is the ruffle. Its function is as follows. Binds to the plus end of microtubules and regulates the dynamics of the microtubule cytoskeleton. Promotes microtubule growth and microtubule bundling. Links cytoplasmic vesicles to microtubules and thereby plays an important role in intracellular vesicle trafficking. Plays a role macropinocytosis and endosome trafficking. This is CAP-Gly domain-containing linker protein 1 (Clip1) from Mus musculus (Mouse).